The primary structure comprises 898 residues: Alanine--tRNA ligase (898 aa).

Positions 582, 586, 685, and 689 each coordinate Zn(2+).

The protein belongs to the class-II aminoacyl-tRNA synthetase family. Zn(2+) serves as cofactor.

The protein resides in the cytoplasm. It carries out the reaction tRNA(Ala) + L-alanine + ATP = L-alanyl-tRNA(Ala) + AMP + diphosphate. In terms of biological role, catalyzes the attachment of alanine to tRNA(Ala) in a two-step reaction: alanine is first activated by ATP to form Ala-AMP and then transferred to the acceptor end of tRNA(Ala). Also edits incorrectly charged Ser-tRNA(Ala) and Gly-tRNA(Ala) via its editing domain. In Mycolicibacterium gilvum (strain PYR-GCK) (Mycobacterium gilvum (strain PYR-GCK)), this protein is Alanine--tRNA ligase.